Here is a 442-residue protein sequence, read N- to C-terminus: D-serine dehydratase 2 (442 aa).

Position 118 is an N6-(pyridoxal phosphate)lysine (Lys-118).

It belongs to the serine/threonine dehydratase family. DsdA subfamily. As to quaternary structure, monomer. Pyridoxal 5'-phosphate serves as cofactor.

It catalyses the reaction D-serine = pyruvate + NH4(+). This Escherichia coli O6:K15:H31 (strain 536 / UPEC) protein is D-serine dehydratase 2.